The chain runs to 245 residues: Uridylate kinase (245 aa).

12–15 (KISG) serves as a coordination point for ATP. Glycine 55 contacts UMP. ATP is bound by residues glycine 56 and arginine 60. Residues aspartate 76 and 137-144 (AGAPYLTT) contribute to the UMP site. The ATP site is built by threonine 164, tyrosine 171, and aspartate 174.

This sequence belongs to the UMP kinase family. Homohexamer.

Its subcellular location is the cytoplasm. It catalyses the reaction UMP + ATP = UDP + ADP. The protein operates within pyrimidine metabolism; CTP biosynthesis via de novo pathway; UDP from UMP (UMPK route): step 1/1. Its activity is regulated as follows. Inhibited by UTP. In terms of biological role, catalyzes the reversible phosphorylation of UMP to UDP. This chain is Uridylate kinase, found in Chlamydia muridarum (strain MoPn / Nigg).